We begin with the raw amino-acid sequence, 647 residues long: Putative ankyrin repeat protein L764 (647 aa).

9 ANK repeats span residues 123 to 154 (LKDREIYLNSNCDDINLIKFIVTRNDYFQINL), 202 to 231 (LTQEHIKLAVQNRKIPVLEHLINLGIEYDL), 233 to 256 (EIINDIKDFDILKYMLEIGNSLNE), 258 to 284 (NVNIIIFNIHTTQLIEYLMNLGYTINS), 289 to 319 (SMFSHMLIVSENTDIVEFLKSINAKDSDLTV), 348 to 377 (DCNLFLKYAIISQDIPNIEYSINKGADLKK), 401 to 431 (NDVNNFILKIIENDCIETLKYLVDNNYNIDL), 529 to 558 (FILKEFPEECSSEKMDTIKFLLDFNADNNE), and 588 to 617 (NGQNIVEYLISDGDHEIFRYLYYNGFDVKN).

The chain is Putative ankyrin repeat protein L764 from Acanthamoeba polyphaga (Amoeba).